The following is a 463-amino-acid chain: Argininosuccinate lyase (463 aa).

This sequence belongs to the lyase 1 family. Argininosuccinate lyase subfamily.

The protein resides in the cytoplasm. The enzyme catalyses 2-(N(omega)-L-arginino)succinate = fumarate + L-arginine. Its pathway is amino-acid biosynthesis; L-arginine biosynthesis; L-arginine from L-ornithine and carbamoyl phosphate: step 3/3. This is Argininosuccinate lyase from Methylorubrum populi (strain ATCC BAA-705 / NCIMB 13946 / BJ001) (Methylobacterium populi).